The sequence spans 556 residues: Arginine--tRNA ligase (556 aa).

Positions 132-142 match the 'HIGH' region motif; that stretch reads VNPTGDLHLGH.

This sequence belongs to the class-I aminoacyl-tRNA synthetase family. As to quaternary structure, monomer.

The protein localises to the cytoplasm. The enzyme catalyses tRNA(Arg) + L-arginine + ATP = L-arginyl-tRNA(Arg) + AMP + diphosphate. The polypeptide is Arginine--tRNA ligase (Oceanobacillus iheyensis (strain DSM 14371 / CIP 107618 / JCM 11309 / KCTC 3954 / HTE831)).